The sequence spans 310 residues: Ribosomal RNA small subunit methyltransferase H (310 aa).

Residues Gly47–His49, Asp66, Phe93, Asp108, and Gln115 each bind S-adenosyl-L-methionine. The segment at Arg275 to Pro310 is disordered. Over residues Arg301 to Pro310 the composition is skewed to basic and acidic residues.

Belongs to the methyltransferase superfamily. RsmH family.

Its subcellular location is the cytoplasm. It catalyses the reaction cytidine(1402) in 16S rRNA + S-adenosyl-L-methionine = N(4)-methylcytidine(1402) in 16S rRNA + S-adenosyl-L-homocysteine + H(+). Specifically methylates the N4 position of cytidine in position 1402 (C1402) of 16S rRNA. This is Ribosomal RNA small subunit methyltransferase H from Synechococcus sp. (strain CC9311).